Reading from the N-terminus, the 1072-residue chain is MSESNAHFSFPKEEEKVLSLWDEIDAFHTSLELTKDKPEFSFFDGPPFATGTPHYGHILASTIKDIVPRYATMTGHHVERRFGWDTHGVPIEHIIDKKLGITGKDDVFKYGLENYNNECRSIVMTYASDWRKTIGRLGRWIDFDNDYKTMYPSFMESTWWAFKQLHEKGQVYRGFKVMPYSTGLTTPLSNFEAQQNYKDVNDPAVTIGFNVIGQEKTQLVAWTTTPWTLPSNLSLCVNADFEYVKIYDETRDRYFILLESLIKTLYKKPKNEKYKIVEKIKGSDLVGLKYEPLFPYFAEQFHETAFRVISDDYVTSDSGTGIVHNAPAFGEEDNAACLKNGVISEDSVLPNAIDDLGRFTKDVPDFEGVYVKDADKLIIKYLTNTGNLLLASQIRHSYPFCWRSDTPLLYRSVPAWFVRVKNIVPQMLDSVMKSHWVPNTIKEKRFANWIANARDWNVSRNRYWGTPIPLWVSDDFEEVVCVGSIKELEELTGVRNITDLHRDVIDKLTIPSKQGKGDLKRIEEVFDCWFESGSMPYASQHYPFENTEKFDERVPANFISEGLDQTRGWFYTLAVLGTHLFGSVPYKNVIVSGIVLAADGRKMSKSLKNYPDPSIVLNKYGADALRLYLINSPVLKAESLKFKEEGVKEVVSKVLLPWWNSFKFLDGQIALLKKMSNIDFQYDDSVKSDNVMDRWILASMQSLVQFIHEEMGQYKLYTVVPKLLNFIDELTNWYIRFNRRRLKGENGVEDCLKALNSLFDALFTFVRAMAPFTPFLSESIYLRLKEYIPEAVLAKYGKDGRSVHFLSYPVVKKEYFDEAIETAVSRMQSVIDLGRNIREKKTISLKTPLKTLVILHSDESYLKDVEALKNYIIEELNVRDVVITSDEAKYGVEYKAVADWPVLGKKLKKDAKKVKDALPSVTSEQVREYLESGKLEVAGIELVKGDLNAIRGLPESAVQAGQETRTDQDVLIIMDTNIYSELKSEGLARELVNRIQKLRKKCGLEATDDVLVEYELVKDTIDFEAIVKEHFDMLSKTCRSDIAKYDGSKTDPIGDEEQSINDTIFKLKVFKL.

The 'HIGH' region motif lies at 47 to 57; the sequence is PFATGTPHYGH. Lys486 is covalently cross-linked (Glycyl lysine isopeptide (Lys-Gly) (interchain with G-Cter in ubiquitin)). The 'KMSKS' region signature appears at 602–606; it reads KMSKS. An ATP-binding site is contributed by Lys605. Phosphoserine is present on residues Ser829 and Ser1059.

It belongs to the class-I aminoacyl-tRNA synthetase family.

The protein localises to the cytoplasm. The catalysed reaction is tRNA(Ile) + L-isoleucine + ATP = L-isoleucyl-tRNA(Ile) + AMP + diphosphate. The sequence is that of Isoleucine--tRNA ligase, cytoplasmic (ILS1) from Saccharomyces cerevisiae (strain ATCC 204508 / S288c) (Baker's yeast).